Consider the following 186-residue polypeptide: MSWRSERIWIELITGSRKTSNFCWAFILFLGSLGFLLVGTSSYLGRNLISLFPSQQIIFFPQGIVMSFYGIAGLFISSYLWCTISWNVGSGYDRFDRKEGIVCIFRWGFPGKNRRIFLRLLMKDIQSIRIAVKEDIYARRILVLYMEIRGQGAIPLTRTDENLTPREMEQKAAELAYFLRVPIEVF.

The next 2 helical transmembrane spans lie at 22 to 42 (FCWA…GTSS) and 57 to 77 (IIFF…LFIS).

Belongs to the Ycf4 family.

Its subcellular location is the plastid. The protein resides in the chloroplast thylakoid membrane. In terms of biological role, seems to be required for the assembly of the photosystem I complex. The sequence is that of Photosystem I assembly protein Ycf4 from Vitis vinifera (Grape).